The chain runs to 424 residues: Serine--tRNA ligase (424 aa).

233–235 contacts L-serine; that stretch reads TAE. An ATP-binding site is contributed by 264-266; sequence RRE. Glutamate 287 is a binding site for L-serine. 351–354 serves as a coordination point for ATP; that stretch reads EISS. Serine 387 contributes to the L-serine binding site.

It belongs to the class-II aminoacyl-tRNA synthetase family. Type-1 seryl-tRNA synthetase subfamily. In terms of assembly, homodimer. The tRNA molecule binds across the dimer.

Its subcellular location is the cytoplasm. It catalyses the reaction tRNA(Ser) + L-serine + ATP = L-seryl-tRNA(Ser) + AMP + diphosphate + H(+). The enzyme catalyses tRNA(Sec) + L-serine + ATP = L-seryl-tRNA(Sec) + AMP + diphosphate + H(+). Its pathway is aminoacyl-tRNA biosynthesis; selenocysteinyl-tRNA(Sec) biosynthesis; L-seryl-tRNA(Sec) from L-serine and tRNA(Sec): step 1/1. Catalyzes the attachment of serine to tRNA(Ser). Is also able to aminoacylate tRNA(Sec) with serine, to form the misacylated tRNA L-seryl-tRNA(Sec), which will be further converted into selenocysteinyl-tRNA(Sec). This Cyanothece sp. (strain PCC 7425 / ATCC 29141) protein is Serine--tRNA ligase.